A 140-amino-acid polypeptide reads, in one-letter code: Photosystem I reaction center subunit XI (140 aa).

A run of 3 helical transmembrane segments spans residues 48-68 (LEIG…LGPL), 79-99 (LLSA…YGAV), and 119-139 (SGFL…LTLF).

This sequence belongs to the PsaL family.

It is found in the plastid. The protein localises to the chloroplast thylakoid membrane. This Cyanidioschyzon merolae (strain NIES-3377 / 10D) (Unicellular red alga) protein is Photosystem I reaction center subunit XI.